Reading from the N-terminus, the 462-residue chain is Argininosuccinate lyase (462 aa).

This sequence belongs to the lyase 1 family. Argininosuccinate lyase subfamily.

Its subcellular location is the cytoplasm. It catalyses the reaction 2-(N(omega)-L-arginino)succinate = fumarate + L-arginine. The protein operates within amino-acid biosynthesis; L-arginine biosynthesis; L-arginine from L-ornithine and carbamoyl phosphate: step 3/3. The protein is Argininosuccinate lyase of Bacillus mycoides (strain KBAB4) (Bacillus weihenstephanensis).